Consider the following 459-residue polypeptide: Exodeoxyribonuclease 7 large subunit (459 aa).

This sequence belongs to the XseA family. As to quaternary structure, heterooligomer composed of large and small subunits.

It is found in the cytoplasm. The enzyme catalyses Exonucleolytic cleavage in either 5'- to 3'- or 3'- to 5'-direction to yield nucleoside 5'-phosphates.. Functionally, bidirectionally degrades single-stranded DNA into large acid-insoluble oligonucleotides, which are then degraded further into small acid-soluble oligonucleotides. The protein is Exodeoxyribonuclease 7 large subunit of Pseudomonas syringae pv. tomato (strain ATCC BAA-871 / DC3000).